Here is a 469-residue protein sequence, read N- to C-terminus: Glutamate--tRNA ligase 2 (469 aa).

The short motif at Pro10–Gly20 is the 'HIGH' region element. Cys99, Cys101, Cys126, and Asp128 together coordinate Zn(2+). Residues Arg237–Arg241 carry the 'KMSKS' region motif. Lys240 is an ATP binding site.

Belongs to the class-I aminoacyl-tRNA synthetase family. Glutamate--tRNA ligase type 1 subfamily. Monomer. Zn(2+) is required as a cofactor.

The protein resides in the cytoplasm. The enzyme catalyses tRNA(Glu) + L-glutamate + ATP = L-glutamyl-tRNA(Glu) + AMP + diphosphate. Catalyzes the attachment of glutamate to tRNA(Glu) in a two-step reaction: glutamate is first activated by ATP to form Glu-AMP and then transferred to the acceptor end of tRNA(Glu). In Coxiella burnetii (strain CbuG_Q212) (Coxiella burnetii (strain Q212)), this protein is Glutamate--tRNA ligase 2.